A 546-amino-acid polypeptide reads, in one-letter code: Chaperonin GroEL (546 aa).

ATP-binding positions include 30 to 33 (TLGP), K51, 87 to 91 (DGTTT), G415, and D497. The tract at residues 527–546 (PKKDSPAPAMPGGGMGGMDF) is disordered. Residues 537–546 (PGGGMGGMDF) show a composition bias toward gly residues.

The protein belongs to the chaperonin (HSP60) family. In terms of assembly, forms a cylinder of 14 subunits composed of two heptameric rings stacked back-to-back. Interacts with the co-chaperonin GroES.

The protein resides in the cytoplasm. The enzyme catalyses ATP + H2O + a folded polypeptide = ADP + phosphate + an unfolded polypeptide.. Functionally, together with its co-chaperonin GroES, plays an essential role in assisting protein folding. The GroEL-GroES system forms a nano-cage that allows encapsulation of the non-native substrate proteins and provides a physical environment optimized to promote and accelerate protein folding. This Methylobacterium radiotolerans (strain ATCC 27329 / DSM 1819 / JCM 2831 / NBRC 15690 / NCIMB 10815 / 0-1) protein is Chaperonin GroEL.